Reading from the N-terminus, the 442-residue chain is Serine--tRNA ligase (442 aa).

Thr249–Glu251 is a binding site for L-serine. Arg280 to Glu282 is a binding site for ATP. Glu303 provides a ligand contact to L-serine. Residue Glu367–Ser370 participates in ATP binding. Residue Ser402 participates in L-serine binding.

This sequence belongs to the class-II aminoacyl-tRNA synthetase family. Type-1 seryl-tRNA synthetase subfamily. Homodimer. The tRNA molecule binds across the dimer.

The protein localises to the cytoplasm. It catalyses the reaction tRNA(Ser) + L-serine + ATP = L-seryl-tRNA(Ser) + AMP + diphosphate + H(+). It carries out the reaction tRNA(Sec) + L-serine + ATP = L-seryl-tRNA(Sec) + AMP + diphosphate + H(+). Its pathway is aminoacyl-tRNA biosynthesis; selenocysteinyl-tRNA(Sec) biosynthesis; L-seryl-tRNA(Sec) from L-serine and tRNA(Sec): step 1/1. Catalyzes the attachment of serine to tRNA(Ser). Is also able to aminoacylate tRNA(Sec) with serine, to form the misacylated tRNA L-seryl-tRNA(Sec), which will be further converted into selenocysteinyl-tRNA(Sec). The chain is Serine--tRNA ligase from Acidovorax ebreus (strain TPSY) (Diaphorobacter sp. (strain TPSY)).